Reading from the N-terminus, the 54-residue chain is ComX pheromone (54 aa).

Positions 1–46 are excised as a propeptide; the sequence is MQEIVGYLVKNPEVLDEVMKGRASLLNIDKDQLKSIVDAFGGLQIY. A lipid anchor (3'-geranyl-2',N2-cyclotryptophan) is attached at Trp-51.

Interacts directly with the sensor histidine kinase ComP and stimulates its activity. Post-translationally, trp-51 is modified by isoprenylation, probably by geranylation, which is essential for activity. Modified by the tryptophan prenyltransferase ComQ before export to the extracellular environment. The type of isoprenyl derivative differs among the different pherotypes and depends on ComX primary sequence.

The protein resides in the secreted. Part of a major quorum-sensing system that regulates the development of genetic competence. Acts through the activation of the two-component regulatory system ComP/ComA composed of a sensor histidine kinase, ComP, and a response regulator, ComA. This chain is ComX pheromone, found in Bacillus mojavensis.